Reading from the N-terminus, the 264-residue chain is Cercarial protease (264 aa).

A signal peptide spans 1 to 19; that stretch reads MSNRWRFVVVVTLFTYCLT. A propeptide spanning residues 20–27 is cleaved from the precursor; it reads FERVSTWL. The region spanning 28-264 is the Peptidase S1 domain; it reads IRSGEPVQHP…RMLDFVRSNI (237 aa). Cys-53 and Cys-69 are oxidised to a cystine. Residues His-68 and Asp-126 each act as charge relay system in the active site. The cysteines at positions 192 and 202 are disulfide-linked. Ser-218 functions as the Charge relay system in the catalytic mechanism.

The protein belongs to the peptidase S1 family. In terms of tissue distribution, acetabular (penetration) glands.

Its activity is regulated as follows. Activated by an autocatalytic mechanism. In terms of biological role, this protease cleaves elastin and thus facilitates penetration of schistosome parasite larvae through elastin-rich tissue of the host. In Schistosoma mansoni (Blood fluke), this protein is Cercarial protease.